Reading from the N-terminus, the 834-residue chain is DNA polymerase I, thermostable (834 aa).

In terms of domain architecture, 5'-3' exonuclease spans 176-262 (KPEQWVDFRA…DLPLEVDLAQ (87 aa)). The tract at residues 412–834 (ERLHRNLLKR…MGEDWLSAKG (423 aa)) is polymerase.

Belongs to the DNA polymerase type-A family.

It catalyses the reaction DNA(n) + a 2'-deoxyribonucleoside 5'-triphosphate = DNA(n+1) + diphosphate. Has 5'-3' exonuclease activity and no 3'-5' exonuclease activity. The protein is DNA polymerase I, thermostable (polA) of Thermus caldophilus.